The chain runs to 140 residues: Mercuric transport protein MerC (140 aa).

Residues 2 to 10 lie on the Cytoplasmic side of the membrane; sequence GLMTRIADK. The helical transmembrane segment at 11–31 threads the bilayer; it reads TGALGSVVSAMGCAACFPALA. Residues Gly22 and Ala25 each coordinate Hg(2+). The Periplasmic portion of the chain corresponds to 32–46; that stretch reads SFGAAIGLGFLSQYE. The chain crosses the membrane as a helical span at residues 47–67; the sequence is GLFISRLLPLFAALAFLANAL. Residues 68–78 are Cytoplasmic-facing; sequence GWFSHRQWLRS. The helical transmembrane segment at 79–99 threads the bilayer; that stretch reads LLGMIGPAIVFAATVWLLGNW. Topologically, residues 100-106 are periplasmic; it reads WTANLMY. A helical transmembrane segment spans residues 107-127; sequence VGLALMIGVSIWDFVSPAHRR. At 128–140 the chain is on the cytoplasmic side; the sequence is CGPDGCELPAKRL.

The protein resides in the cell inner membrane. Its activity is regulated as follows. Uptake of Hg(2+) is decreased by iodoacetamide and iodoacetate, and is completely inhibited by the thiol-modifying reagent N-ethylmaleimide (NEM). Involved in mercuric ion uptake and binding. MerC-mediated Hg(2+) uptake does not require MerP. In Shigella flexneri, this protein is Mercuric transport protein MerC.